The chain runs to 444 residues: Chitinase-like protein Idgf1 (444 aa).

The N-terminal stretch at 1-20 (MTSLLFVILNIILTLHLCAG) is a signal peptide. A GH18 domain is found at 29-444 (KRLICYYDAQ…PILRSVRGHL (416 aa)). Cysteines 33 and 60 form a disulfide. N-linked (GlcNAc...) asparagine glycans are attached at residues N213, N225, and N335. A disulfide bond links C346 and C429.

This sequence belongs to the glycosyl hydrolase 18 family. IDGF subfamily. In terms of processing, glycosylated.

It localises to the secreted. In terms of biological role, cooperates with insulin-like peptides to stimulate the proliferation, polarization and motility of imaginal disk cells. May act by stabilizing the binding of insulin-like peptides to its receptor through a simultaneous interaction with both molecules to form a multiprotein signaling complex. The chain is Chitinase-like protein Idgf1 (Idgf1) from Glossina morsitans morsitans (Savannah tsetse fly).